A 346-amino-acid chain; its full sequence is Biotin synthase (346 aa).

A Radical SAM core domain is found at 38 to 256; it reads KQIQVSTLLS…IAVARIMMPT (219 aa). [4Fe-4S] cluster contacts are provided by Cys53, Cys57, and Cys60. [2Fe-2S] cluster-binding residues include Cys97, Cys128, Cys188, and Arg260.

Belongs to the radical SAM superfamily. Biotin synthase family. As to quaternary structure, homodimer. It depends on [4Fe-4S] cluster as a cofactor. Requires [2Fe-2S] cluster as cofactor.

The enzyme catalyses (4R,5S)-dethiobiotin + (sulfur carrier)-SH + 2 reduced [2Fe-2S]-[ferredoxin] + 2 S-adenosyl-L-methionine = (sulfur carrier)-H + biotin + 2 5'-deoxyadenosine + 2 L-methionine + 2 oxidized [2Fe-2S]-[ferredoxin]. It functions in the pathway cofactor biosynthesis; biotin biosynthesis; biotin from 7,8-diaminononanoate: step 2/2. Its function is as follows. Catalyzes the conversion of dethiobiotin (DTB) to biotin by the insertion of a sulfur atom into dethiobiotin via a radical-based mechanism. This is Biotin synthase from Salmonella arizonae (strain ATCC BAA-731 / CDC346-86 / RSK2980).